We begin with the raw amino-acid sequence, 370 residues long: Histidinol-phosphate aminotransferase 1 (370 aa).

Residue Lys222 is modified to N6-(pyridoxal phosphate)lysine.

The protein belongs to the class-II pyridoxal-phosphate-dependent aminotransferase family. Histidinol-phosphate aminotransferase subfamily. As to quaternary structure, homodimer. Requires pyridoxal 5'-phosphate as cofactor.

The enzyme catalyses L-histidinol phosphate + 2-oxoglutarate = 3-(imidazol-4-yl)-2-oxopropyl phosphate + L-glutamate. The protein operates within amino-acid biosynthesis; L-histidine biosynthesis; L-histidine from 5-phospho-alpha-D-ribose 1-diphosphate: step 7/9. This Bacillus anthracis protein is Histidinol-phosphate aminotransferase 1 (hisC1).